Consider the following 148-residue polypeptide: UPF0756 membrane protein YeaL (148 aa).

The next 4 helical transmembrane spans lie at 14–34 (ALGFISHNTTVAVSILVLIIV), 51–71 (LTVGIIILTIGVMAPIASGTL), 86–106 (LVAIAVGVFVSWLGGRGITLM), and 121–141 (VLGVALFRGVPVGPLIAAGLV).

It belongs to the UPF0756 family.

The protein resides in the cell membrane. This chain is UPF0756 membrane protein YeaL, found in Salmonella choleraesuis (strain SC-B67).